The following is a 222-amino-acid chain: 2-C-methyl-D-erythritol 2,4-cyclodiphosphate synthase, chloroplastic (222 aa).

The N-terminal 43 residues, 1–43 (MATASSLFLASPVATAPTARARSTPSASPARPSLRLRRPSTLA), are a transit peptide targeting the chloroplast. A divalent metal cation-binding residues include D73 and H75. Residues 73–75 (DLH), 99–100 (HS), 103–111 (DVLLHCVVD), 121–123 (DIG), 126–130 (FPDSD), D130, 165–171 (LQKPKIS), and 196–200 (AKTHE) contribute to the substrate site. H107 provides a ligand contact to a divalent metal cation.

The protein belongs to the IspF family. Homotrimer. Requires a divalent metal cation as cofactor. As to expression, expressed in roots, leaves, stems, leaf sheaths and young panicles.

It is found in the plastid. Its subcellular location is the chloroplast. It catalyses the reaction 4-CDP-2-C-methyl-D-erythritol 2-phosphate = 2-C-methyl-D-erythritol 2,4-cyclic diphosphate + CMP. It functions in the pathway isoprenoid biosynthesis; isopentenyl diphosphate biosynthesis via DXP pathway; isopentenyl diphosphate from 1-deoxy-D-xylulose 5-phosphate: step 4/6. Its function is as follows. Enzyme of the plastid non-mevalonate pathway for isoprenoid biosynthesis that converts 4-diphosphocytidyl-2C-methyl-D-erythritol 2-phosphate into 2C-methyl-D-erythritol 2,4-cyclodiphosphate and CMP. Is essential for chloroplast development. The protein is 2-C-methyl-D-erythritol 2,4-cyclodiphosphate synthase, chloroplastic of Oryza sativa subsp. japonica (Rice).